The sequence spans 520 residues: uncharacterized protein (520 aa).

9 helical membrane-spanning segments follow: residues 38–58 (VVLI…IPGG), 84–104 (IAIY…GIFN), 105–125 (IGIS…ILKV), 138–158 (IITV…VATL), 167–187 (VVSA…LVET), 220–240 (FGWL…AVVL), 271–291 (FLSF…VYTA), 318–338 (IAIG…SVLI), and 355–375 (ASLV…MVYF).

The protein resides in the cell membrane. This is an uncharacterized protein from Mycoplasma genitalium (strain ATCC 33530 / DSM 19775 / NCTC 10195 / G37) (Mycoplasmoides genitalium).